Reading from the N-terminus, the 90-residue chain is MTQYRRVAIKNRLGMHARPAMKLFDLVNTFQSTVTLRNHEGVEAQADSVIAMLMLDSEQGSHIDIEASGCDEKEAIDAIIALFESGFDED.

The region spanning 2-90 (TQYRRVAIKN…ALFESGFDED (89 aa)) is the HPr domain. Residue His-16 is the Pros-phosphohistidine intermediate of the active site.

Belongs to the HPr family.

It is found in the cytoplasm. In terms of biological role, component of the phosphoenolpyruvate-dependent nitrogen-metabolic phosphotransferase system (nitrogen-metabolic PTS), that seems to be involved in regulating nitrogen metabolism. The phosphoryl group from phosphoenolpyruvate (PEP) is transferred to the phosphoryl carrier protein NPr by enzyme I-Ntr. Phospho-NPr then transfers it to EIIA-Ntr. Could function in the transcriptional regulation of sigma-54 dependent operons in conjunction with the NPr (PtsO) and EIIA-Ntr (PtsN) proteins. This chain is Phosphocarrier protein NPr (ptsO), found in Proteus mirabilis (strain HI4320).